Consider the following 107-residue polypeptide: SH3 domain-binding glutamic acid-rich-like protein 2 (107 aa).

The SH3-binding signature appears at Gln61–Pro67.

This sequence belongs to the SH3BGR family.

The protein resides in the nucleus. This chain is SH3 domain-binding glutamic acid-rich-like protein 2 (Sh3bgrl2), found in Mus musculus (Mouse).